Consider the following 275-residue polypeptide: T cell receptor alpha chain MC.7.G5 (275 aa).

An N-terminal signal peptide occupies residues 1–21; it reads MACPGFLWALVISTCLEFSMA. The region spanning 22–116 is the Ig-like V-type domain; sequence QTVTQSQPEM…AAMYFCAYRS (95 aa). A t cell receptor alpha variable 38-2DV8 region spans residues 22–116; it reads QTVTQSQPEM…AAMYFCAYRS (95 aa). C43 and C112 are joined by a disulfide. Positions 47 to 53 are CDR1; that stretch reads TSESDYY. Residues 71–81 form a CDR2 region; sequence QEAYKQQNATE. An N-linked (GlcNAc...) asparagine glycan is attached at N78. The CDR3 stretch occupies residues 112–124; the sequence is CAYRSAVNARLMF. The interval 119–134 is t cell receptor alpha joining 31; sequence NARLMFGDGTQLVVKP. The interval 136–275 is t cell receptor alpha constant; it reads IQNPDPAVYQ…LLMTLRLWSS (140 aa). The 89-residue stretch at 154–242 folds into the Ig-like C1-type domain; sequence KSVCLFTDFD…LVEKSFETDT (89 aa). A disulfide bridge links C157 with C207. Residues N167, N201, N212, and N248 are each glycosylated (N-linked (GlcNAc...) asparagine). The interval 229–250 is connecting peptide; the sequence is CDVKLVEKSFETDTNLNFQNLS. Residues 251 to 273 form a helical membrane-spanning segment; it reads VIGFRILLLKVAGFNLLMTLRLW. Over 274–275 the chain is Cytoplasmic; that stretch reads SS.

In terms of assembly, disulfide-linked heterodimer with TRBV25-1*01J2S3*01C2*01 beta chain. The alpha-beta TR associates with the transmembrane signaling CD3 coreceptor proteins to form the TR-CD3 (TCR). The assembly of alpha-beta TR heterodimers with CD3 occurs in the endoplasmic reticulum where a single alpha-beta TR heterodimer associates with one CD3D-CD3E heterodimer, one CD3G-CD3E heterodimer and one CD247 homodimer forming a stable octameric structure. CD3D-CD3E and CD3G-CD3E heterodimers preferentially associate with TR alpha and TR beta chains (via TM domain), respectively. The association of the CD247 homodimer is the last step of TCR assembly in the endoplasmic reticulum and is required for transport to the cell surface. Expressed in MR1-restricted CD8-positive T cells.

It localises to the cell membrane. Its function is as follows. The alpha chain of TRAV38-2DV8*01J31*01C*01/TRBV25-1*01J2S3*01C2*01 alpha-beta T cell receptor (TR) clonotype that displays pan-cancer cell recognition via the invariant MR1 molecule. On CD8-positive T cell clone MC.7.G5, likely recognizes tumor-specific or -associated metabolite(s) essential for cancer cell survival, triggering killing of many cancer cell types including lung, melanoma, leukemia, colon, breast, prostate, bone and ovarian cancer cells. Mediates cancer cell cytotoxicity in an HLA-independent manner. Has no reactivity to healthy cells, even stressed or infected by bacteria. Antigen recognition initiates TR-CD3 clustering on the cell surface and intracellular activation of LCK that phosphorylates the ITAM motifs of CD3G, CD3D, CD3E and CD247 enabling the recruitment of ZAP70. In turn, ZAP70 phosphorylates LAT, which recruits numerous signaling molecules to form the LAT signalosome. The LAT signalosome propagates signal branching to three major signaling pathways, the calcium, the mitogen-activated protein kinase (MAPK) kinase and the nuclear factor NF-kappa-B (NF-kB) pathways, leading to the mobilization of transcription factors that are critical for gene expression and essential for T cell differentiation into effector/memory T cells. In Homo sapiens (Human), this protein is T cell receptor alpha chain MC.7.G5.